We begin with the raw amino-acid sequence, 104 residues long: Small ribosomal subunit protein uS10 (104 aa).

It belongs to the universal ribosomal protein uS10 family. In terms of assembly, part of the 30S ribosomal subunit.

Involved in the binding of tRNA to the ribosomes. The chain is Small ribosomal subunit protein uS10 from Aliarcobacter butzleri (strain RM4018) (Arcobacter butzleri).